Here is a 612-residue protein sequence, read N- to C-terminus: uncharacterized protein (612 aa).

A DNA-binding region (zn(2)-C6 fungal-type) is located at residues 6–32; that stretch reads CLYCRRRKIKCDKNRPCHNCFVAKREC.

The protein resides in the cytoplasm. It localises to the nucleus. This is an uncharacterized protein from Schizosaccharomyces pombe (strain 972 / ATCC 24843) (Fission yeast).